A 598-amino-acid chain; its full sequence is Beta-galactosidase (598 aa).

A signal peptide spans 1-21; the sequence is MLRTTLAPLVLALALALPAAA. Glutamate 184 (proton donor) is an active-site residue. Residue glutamate 260 is the Nucleophile of the active site.

It belongs to the glycosyl hydrolase 35 family.

The catalysed reaction is Hydrolysis of terminal non-reducing beta-D-galactose residues in beta-D-galactosides.. Preferentially hydrolyzes beta(1-&gt;3) galactosyl linkages over beta(1-&gt;4) linkages. This is Beta-galactosidase (bga) from Xanthomonas manihotis.